An 87-amino-acid chain; its full sequence is Cuticle protein 1 (87 aa).

Q1 bears the Pyrrolidone carboxylic acid mark. 3 tandem repeats follow at residues 5 to 20, 43 to 58, and 71 to 86. 3 cysteine pairs are disulfide-bonded: C14–C20, C52–C58, and C80–C86.

In Blaberus craniifer (Death's head cockroach), this protein is Cuticle protein 1.